Reading from the N-terminus, the 151-residue chain is Transcriptional repressor NrdR (151 aa).

The segment at 1–21 (MRCPFCGEADTQVKDSRPTED) is disordered. A zinc finger spans residues 3–34 (CPFCGEADTQVKDSRPTEDGAAIRRRRFCPQC). Basic and acidic residues predominate over residues 11-21 (TQVKDSRPTED). In terms of domain architecture, ATP-cone spans 49-139 (LVVVKADQRR…VYRDFREAKD (91 aa)).

It belongs to the NrdR family. Requires Zn(2+) as cofactor.

Its function is as follows. Negatively regulates transcription of bacterial ribonucleotide reductase nrd genes and operons by binding to NrdR-boxes. The sequence is that of Transcriptional repressor NrdR from Acidiphilium cryptum (strain JF-5).